Here is an 823-residue protein sequence, read N- to C-terminus: Valine--tRNA ligase (823 aa).

Residue Lys547 participates in ATP binding.

This sequence belongs to the class-I aminoacyl-tRNA synthetase family. ValS type 2 subfamily.

The protein resides in the cytoplasm. It carries out the reaction tRNA(Val) + L-valine + ATP = L-valyl-tRNA(Val) + AMP + diphosphate. Catalyzes the attachment of valine to tRNA(Val). As ValRS can inadvertently accommodate and process structurally similar amino acids such as threonine, to avoid such errors, it has a 'posttransfer' editing activity that hydrolyzes mischarged Thr-tRNA(Val) in a tRNA-dependent manner. In Aeropyrum pernix (strain ATCC 700893 / DSM 11879 / JCM 9820 / NBRC 100138 / K1), this protein is Valine--tRNA ligase (valS).